Here is a 98-residue protein sequence, read N- to C-terminus: MSCFDLCRPCGPTPLANSCNEPCVRQCQDSRVVIQPSPVVVTLPGPILSSFPQNTAAGSSTSAAVGSILSEEGVPISSGGFGISGLGSRFSGRRCLPC.

This sequence belongs to the avian keratin family. In terms of assembly, the avian keratins (F-ker, S-ker, C-ker and B-ker) are a complex mixture of very similar polypeptides.

This is Feather keratin 1 from Gallus gallus (Chicken).